The sequence spans 147 residues: Protein archease (147 aa).

3 residues coordinate Ca(2+): aspartate 17, aspartate 146, and valine 147.

It belongs to the archease family.

Functionally, activates the tRNA-splicing ligase complex by facilitating the enzymatic turnover of catalytic subunit RtcB. Acts by promoting the guanylylation of RtcB, a key intermediate step in tRNA ligation. Can also alter the NTP specificity of RtcB such that ATP, dGTP or ITP is used efficiently. The protein is Protein archease of Pyrobaculum islandicum (strain DSM 4184 / JCM 9189 / GEO3).